We begin with the raw amino-acid sequence, 136 residues long: Histone H2B.5 (136 aa).

Basic and acidic residues predominate over residues 1–36 (MAPKAEKKPAAEKKPVETEKKPKAEKRVPGKDGGAD). Positions 1–44 (MAPKAEKKPAAEKKPVETEKKPKAEKRVPGKDGGADKKKKKAKK) are disordered. N6-acetyllysine occurs at positions 7 and 26. A Glycyl lysine isopeptide (Lys-Gly) (interchain with G-Cter in ubiquitin) cross-link involves residue Lys132.

Belongs to the histone H2B family. The nucleosome is a histone octamer containing two molecules each of H2A, H2B, H3 and H4 assembled in one H3-H4 heterotetramer and two H2A-H2B heterodimers. The octamer wraps approximately 147 bp of DNA. In terms of processing, can be acetylated to form H2BK6ac and H2BK33ac. Monoubiquitinated to form H2BK143ub1; may give a specific tag for epigenetic transcriptional activation.

Its subcellular location is the nucleus. It localises to the chromosome. Its function is as follows. Core component of nucleosome. Nucleosomes wrap and compact DNA into chromatin, limiting DNA accessibility to the cellular machineries which require DNA as a template. Histones thereby play a central role in transcription regulation, DNA repair, DNA replication and chromosomal stability. DNA accessibility is regulated via a complex set of post-translational modifications of histones, also called histone code, and nucleosome remodeling. This Triticum aestivum (Wheat) protein is Histone H2B.5.